Here is a 237-residue protein sequence, read N- to C-terminus: Large ribosomal subunit protein uL1 (237 aa).

The protein belongs to the universal ribosomal protein uL1 family. Part of the 50S ribosomal subunit.

Binds directly to 23S rRNA. The L1 stalk is quite mobile in the ribosome, and is involved in E site tRNA release. In terms of biological role, protein L1 is also a translational repressor protein, it controls the translation of the L11 operon by binding to its mRNA. The protein is Large ribosomal subunit protein uL1 of Rickettsia typhi (strain ATCC VR-144 / Wilmington).